Here is a 222-residue protein sequence, read N- to C-terminus: Nudix hydrolase 11 (222 aa).

The Nudix hydrolase domain maps to 31–175 (AKSSAVLVCL…EGERYLLQYF (145 aa)). Positions 73 to 96 (GGKRDQEDKDDIATALREAREEIG) match the Nudix box motif. Residues Glu90 and Glu94 each contribute to the Mg(2+) site. The helical transmembrane segment at 186–204 (FIIWALTAGILIRVASIVY) threads the bilayer.

The protein belongs to the Nudix hydrolase family. PCD1 subfamily. Mn(2+) serves as cofactor. It depends on Mg(2+) as a cofactor. In terms of tissue distribution, expressed in roots, stems and leaves.

Its subcellular location is the peroxisome membrane. Its function is as follows. Coenzyme A diphosphatase which mediates the cleavage of CoA into 3',5'-ADP from CoA and 4'-phosphopantetheine. Can use malonyl-CoA, hexanoyl-CoA, lauroyl-CoA, myristoyl-CoA and palmitoyl-CoA as substrates, but not isobutyryl-CoA or propionyl-CoA. This chain is Nudix hydrolase 11 (NUDT11), found in Arabidopsis thaliana (Mouse-ear cress).